Consider the following 427-residue polypeptide: Serine--tRNA ligase (427 aa).

231–233 serves as a coordination point for L-serine; that stretch reads TAE. Position 262–264 (262–264) interacts with ATP; it reads RSE. An L-serine-binding site is contributed by E285. Residue 349–352 coordinates ATP; the sequence is EISS. Residue S385 coordinates L-serine.

The protein belongs to the class-II aminoacyl-tRNA synthetase family. Type-1 seryl-tRNA synthetase subfamily. Homodimer. The tRNA molecule binds across the dimer.

It is found in the cytoplasm. The enzyme catalyses tRNA(Ser) + L-serine + ATP = L-seryl-tRNA(Ser) + AMP + diphosphate + H(+). It catalyses the reaction tRNA(Sec) + L-serine + ATP = L-seryl-tRNA(Sec) + AMP + diphosphate + H(+). It participates in aminoacyl-tRNA biosynthesis; selenocysteinyl-tRNA(Sec) biosynthesis; L-seryl-tRNA(Sec) from L-serine and tRNA(Sec): step 1/1. Catalyzes the attachment of serine to tRNA(Ser). Is also able to aminoacylate tRNA(Sec) with serine, to form the misacylated tRNA L-seryl-tRNA(Sec), which will be further converted into selenocysteinyl-tRNA(Sec). The protein is Serine--tRNA ligase of Brucella canis (strain ATCC 23365 / NCTC 10854 / RM-666).